Here is a 319-residue protein sequence, read N- to C-terminus: Transcription factor VBP (319 aa).

Composition is skewed to low complexity over residues 1–31 (MPGR…GAVA) and 143–158 (ASAS…STAV). Disordered regions lie at residues 1 to 35 (MPGR…QQPE) and 139 to 186 (EKEP…DPDC). Residues 159–180 (YQQSEAASSTESPPQNERNTPS) show a composition bias toward polar residues. The region spanning 243–306 (DEKYWTRRKK…GRCKNIVSKY (64 aa)) is the bZIP domain. Residues 245 to 265 (KYWTRRKKNNVAAKRSRDARR) are basic motif. Residues 266 to 273 (LKENQITI) form a leucine-zipper region.

It belongs to the bZIP family. PAR subfamily. As to quaternary structure, binds DNA as a homodimer or a heterodimer. Exists as a stable dimer in the absence of DNA. In terms of tissue distribution, isoform 1 and isoform 3 are expressed in a variety of somatic tissues, including liver, heart, intestine, stomach and kidney. Both isoforms are also expressed in hepatoma (LMH) cells and in embryonic fibroblast cell lines. Isoform 2 and isoform 4 are expressed in adult heart and intestine.

Its subcellular location is the nucleus. Functionally, transcription factor that binds to and transactivates the vitellogenin II (VTG2) promoter. Binds to the palindromic sequence 5'-GTTTACATAAAC-3'. This Gallus gallus (Chicken) protein is Transcription factor VBP (TEF).